Consider the following 178-residue polypeptide: RNA pyrophosphohydrolase (178 aa).

The Nudix hydrolase domain maps to 18 to 171 (PYRPCVGLMV…KRKVYEQVVA (154 aa)). The short motif at 59–80 (GGIDKGEDPAQAALRELYEETG) is the Nudix box element.

The protein belongs to the Nudix hydrolase family. RppH subfamily. Requires a divalent metal cation as cofactor.

Accelerates the degradation of transcripts by removing pyrophosphate from the 5'-end of triphosphorylated RNA, leading to a more labile monophosphorylated state that can stimulate subsequent ribonuclease cleavage. This is RNA pyrophosphohydrolase from Brucella melitensis biotype 2 (strain ATCC 23457).